Reading from the N-terminus, the 193-residue chain is Potassium-transporting ATPase KdpC subunit (193 aa).

Residues 14–34 (ITFTFLVLCGLVYPLIVTGIA) form a helical membrane-spanning segment.

This sequence belongs to the KdpC family. In terms of assembly, the system is composed of three essential subunits: KdpA, KdpB and KdpC.

The protein resides in the cell membrane. Its function is as follows. Part of the high-affinity ATP-driven potassium transport (or Kdp) system, which catalyzes the hydrolysis of ATP coupled with the electrogenic transport of potassium into the cytoplasm. This subunit acts as a catalytic chaperone that increases the ATP-binding affinity of the ATP-hydrolyzing subunit KdpB by the formation of a transient KdpB/KdpC/ATP ternary complex. The protein is Potassium-transporting ATPase KdpC subunit of Bacillus cereus (strain G9842).